We begin with the raw amino-acid sequence, 99 residues long: High mobility group nucleosome-binding domain-containing protein 3 (99 aa).

Basic and acidic residues-rich tracts occupy residues Met-1–Arg-25, Pro-39–Gly-53, and Gly-62–Lys-72. Residues Met-1 to Glu-99 are disordered. Ser-6 is subject to Phosphoserine. Thr-10 carries the post-translational modification Phosphothreonine. Residues Ser-78 and Ser-93 each carry the phosphoserine modification. The segment covering Gly-81–Ser-93 has biased composition (basic and acidic residues).

It belongs to the HMGN family. In terms of assembly, interacts with the ligand binding domain of the thyroid receptor (TR) (in vitro). Requires the presence of thyroid hormone for its interaction. Interacts with transcriptional regulator SEHBP. Interacts with nucleosomes.

It is found in the nucleus. Its function is as follows. Binds to nucleosomes, regulating chromatin structure and consequently, chromatin-dependent processes such as transcription, DNA replication and DNA repair. Affects both insulin and glucagon levels and modulates the expression of pancreatic genes involved in insulin secretion. Regulates the expression of the glucose transporter SLC2A2 by binding specifically to its promoter region and recruiting PDX1 and additional transcription factors. Regulates the expression of SLC6A9, a glycine transporter which regulates the glycine concentration in synaptic junctions in the central nervous system, by binding to its transcription start site. May play a role in ocular development and astrocyte function. The sequence is that of High mobility group nucleosome-binding domain-containing protein 3 (HMGN3) from Pongo abelii (Sumatran orangutan).